A 1024-amino-acid chain; its full sequence is Protein sumv-1 (1024 aa).

Disordered regions lie at residues 447 to 486, 501 to 564, 577 to 617, 645 to 664, 710 to 739, and 773 to 1024; these read DASQFGGGKKKQRLPPRRSPSFGTSPNSYQFHQQSQKKMP, NFQG…RRGV, PSRH…RSQA, SQMAGQRPGMTPSAQQGSPQ, VRSGSSSSVAGPSRSSVASGSQHTALDTVQ, and AGNS…EEEL. 3 stretches are compositionally biased toward polar residues: residues 467-486, 501-514, and 528-542; these read SFGTSPNSYQFHQQSQKKMP, NFQGWKNQSTSSAT, and RSQQPKMIPLEQTQD. Low complexity predominate over residues 584-600; that stretch reads SPLTPSTSTSSSQLLAP. Residues 605-617 show a composition bias toward polar residues; that stretch reads QPGTSSQTFRSQA. Low complexity-rich tracts occupy residues 710–730 and 784–809; these read VRSGSSSSVAGPSRSSVASGS and AGAPGAKESSKAAGGAQKGTSAASTS. Residues 810 to 832 show a composition bias toward polar residues; that stretch reads VPEPTKSSESSVDPQSDVSFSNP. Positions 859–870 are enriched in low complexity; that stretch reads TLASESTSSEAT. Residues 873-883 are compositionally biased toward polar residues; the sequence is HDTTSSSSAET. Residues 903 to 914 show a composition bias toward basic and acidic residues; sequence PEKEKEKIDRPK. 3 stretches are compositionally biased toward low complexity: residues 916–943, 952–962, and 970–986; these read PKSSTKRTTPTPSGRTPRAAAIAANQAI, SASTSSSAAST, and LLAELSVAAAAEEQQQA. A compositionally biased stretch (polar residues) spans 987-998; sequence IGSTSKNGGSTK.

It localises to the nucleus. It is found in the cytoplasm. The protein localises to the cell projection. The protein resides in the axon. Nuclear factor that influences the activity of genes involved in vulval development. This is Protein sumv-1 from Caenorhabditis elegans.